We begin with the raw amino-acid sequence, 750 residues long: Photosystem I P700 chlorophyll a apoprotein A1 (750 aa).

Helical transmembrane passes span Val70 to Ala93, Leu156 to His179, Leu195 to Leu219, Ile291 to Tyr309, Trp346 to Tyr369, Leu385 to Val411, Ala433 to His455, and Phe531 to Leu549. [4Fe-4S] cluster contacts are provided by Cys573 and Cys582. A run of 2 helical transmembrane segments spans residues His589–Trp610 and Leu664–Phe686. Position 675 (His675) interacts with chlorophyll a'. Chlorophyll a is bound by residues Met683 and Tyr691. Trp692 is a binding site for phylloquinone. A helical transmembrane segment spans residues Ala724–Ala744.

This sequence belongs to the PsaA/PsaB family. The PsaA/B heterodimer binds the P700 chlorophyll special pair and subsequent electron acceptors. PSI consists of a core antenna complex that captures photons, and an electron transfer chain that converts photonic excitation into a charge separation. The eukaryotic PSI reaction center is composed of at least 11 subunits. The cofactor is P700 is a chlorophyll a/chlorophyll a' dimer, A0 is one or more chlorophyll a, A1 is one or both phylloquinones and FX is a shared 4Fe-4S iron-sulfur center..

The protein resides in the plastid. It localises to the chloroplast thylakoid membrane. The enzyme catalyses reduced [plastocyanin] + hnu + oxidized [2Fe-2S]-[ferredoxin] = oxidized [plastocyanin] + reduced [2Fe-2S]-[ferredoxin]. Functionally, psaA and PsaB bind P700, the primary electron donor of photosystem I (PSI), as well as the electron acceptors A0, A1 and FX. PSI is a plastocyanin-ferredoxin oxidoreductase, converting photonic excitation into a charge separation, which transfers an electron from the donor P700 chlorophyll pair to the spectroscopically characterized acceptors A0, A1, FX, FA and FB in turn. Oxidized P700 is reduced on the lumenal side of the thylakoid membrane by plastocyanin. The protein is Photosystem I P700 chlorophyll a apoprotein A1 of Olimarabidopsis pumila (Dwarf rocket).